The primary structure comprises 267 residues: Indole-3-glycerol phosphate synthase (267 aa).

Belongs to the TrpC family.

It carries out the reaction 1-(2-carboxyphenylamino)-1-deoxy-D-ribulose 5-phosphate + H(+) = (1S,2R)-1-C-(indol-3-yl)glycerol 3-phosphate + CO2 + H2O. Its pathway is amino-acid biosynthesis; L-tryptophan biosynthesis; L-tryptophan from chorismate: step 4/5. This is Indole-3-glycerol phosphate synthase from Cupriavidus necator (strain ATCC 17699 / DSM 428 / KCTC 22496 / NCIMB 10442 / H16 / Stanier 337) (Ralstonia eutropha).